We begin with the raw amino-acid sequence, 154 residues long: 3-hydroxyacyl-[acyl-carrier-protein] dehydratase FabZ (154 aa).

His57 is a catalytic residue.

It belongs to the thioester dehydratase family. FabZ subfamily.

The protein resides in the cytoplasm. The enzyme catalyses a (3R)-hydroxyacyl-[ACP] = a (2E)-enoyl-[ACP] + H2O. Functionally, involved in unsaturated fatty acids biosynthesis. Catalyzes the dehydration of short chain beta-hydroxyacyl-ACPs and long chain saturated and unsaturated beta-hydroxyacyl-ACPs. The protein is 3-hydroxyacyl-[acyl-carrier-protein] dehydratase FabZ of Allorhizobium ampelinum (strain ATCC BAA-846 / DSM 112012 / S4) (Agrobacterium vitis (strain S4)).